A 957-amino-acid chain; its full sequence is Outer kinetochore KNL1 complex subunit knl-1 (957 aa).

Residues 87-90 form repeat 1; the sequence is MDIT. The 8 X 4 AA repeats of M-[D/E]-[I/L/M]-[S/T] stretch occupies residues 87 to 393; it reads MDITGLNSTP…NFDDVAMDIT (307 aa). The disordered stretch occupies residues 89–111; that stretch reads ITGLNSTPVTPKTQTPFNGSMDM. Residues 91–106 are compositionally biased toward polar residues; sequence GLNSTPVTPKTQTPFN. Repeat copies occupy residues 109–112, 206–209, 251–254, 282–285, 326–329, 367–370, and 390–393. Positions 476-504 are disordered; it reads SLQQSSMRMSTTITEDVTASKNPESSTIS. Residues 830 to 950 adopt a coiled-coil conformation; that stretch reads KFAKESNVEI…RKKKEEMVER (121 aa).

In terms of assembly, component of the KNL1 complex composed of knl-1 and kbp-5. Part of the ten-subunit outer kinetochore KMN network that includes the KNL1, MIS12 and NDC80 complexes. Interacts with the protein phosphatase 1 (PP1) catalytic subunit gsp-1; the interaction is direct. Interacts with the protein phosphatase 1 (PP1) catalytic subunit gsp-2; the interaction is direct. Interacts with the MIS12 complex subunits kbp-1, kbp-2 and mis-12. Interacts with the NDC80 complex components ndc-80 and him-10. Interacts with knl-3. Interacts with kbp-3. Interacts with kbp-4. Interacts with kbp-5.

Its subcellular location is the cytoplasm. It is found in the cell cortex. The protein localises to the chromosome. It localises to the centromere. The protein resides in the kinetochore. Its function is as follows. Acts as a component of the outer kinetochore KNL1 complex that serves as a docking point for spindle assembly checkpoint components and mediates microtubule-kinetochore interactions. Kinetochores, consisting of a centromere-associated inner segment and a microtubule-contacting outer segment, play a crucial role in chromosome segregation by mediating the physical connection between centromeric DNA and spindle microtubules. The outer kinetochore is made up of the ten-subunit KMN network, comprising the MIS12, NDC80 and KNL1 complexes, and auxiliary microtubule-associated components; together they connect the outer kinetochore with the inner kinetochore, bind microtubules, and mediate interactions with mitotic checkpoint proteins that delay anaphase until chromosomes are bioriented on the spindle. Binds the protein phosphatase 1 catalytic subunits gsp-1 and gsp-2, which has a role in delaying formation of load-bearing kinetochore-microtubule attachments. Required for the recruitment of spindle-assembly checkpoint components bub-1 and mdf-1/2 to unattached kinetochores. Binds microtubules which plays a role in silencing of the spindle assembly checkpoint, but not the formation of load-bearing microtubule-kinetochore attachments. Has a role in the correct localization of the spindly-like protein spdl-1 and the RZZ complex that is composed of rod-1, czw-1 and zwl-1 to kinetochores. The protein is Outer kinetochore KNL1 complex subunit knl-1 of Caenorhabditis briggsae.